Reading from the N-terminus, the 66-residue chain is Putative transmembrane protein ORF66 (66 aa).

Over methionine 1 to aspartate 6 the chain is Cytoplasmic. The chain crosses the membrane as a helical span at residues threonine 7–valine 27. Over serine 28–glutamate 39 the chain is Extracellular. A helical transmembrane segment spans residues tyrosine 40–glycine 60. At lysine 61 to serine 66 the chain is on the cytoplasmic side.

The protein resides in the host membrane. The protein is Putative transmembrane protein ORF66 of Acidianus filamentous virus 2 (isolate Italy/Pozzuoli) (AFV-2).